The chain runs to 47 residues: MSSFDYLKSAIKQKGCTLDEVAEPSGMTKGYLSQLLNRKIKARARRS.

The region spanning 7–47 (LKSAIKQKGCTLDEVAEPSGMTKGYLSQLLNRKIKARARRS) is the HTH cro/C1-type domain. The H-T-H motif DNA-binding region spans 18-37 (LDEVAEPSGMTKGYLSQLLN).

The protein localises to the cell membrane. It localises to the cytoplasm. It catalyses the reaction beta-nicotinamide D-ribonucleotide + ATP + H(+) = diphosphate + NAD(+). The catalysed reaction is beta-nicotinamide D-riboside + ATP = beta-nicotinamide D-ribonucleotide + ADP + H(+). It functions in the pathway cofactor biosynthesis; NAD(+) biosynthesis [regulation]. Its pathway is cofactor biosynthesis; NAD(+) biosynthesis; NAD(+) from nicotinamide D-ribonucleotide: step 1/1. Its function is as follows. This enzyme has three activities: DNA binding, nicotinamide mononucleotide (NMN) adenylyltransferase and ribosylnicotinamide (RN) kinase. The DNA-binding domain binds to the nadB operator sequence in an NAD- and ATP-dependent manner. As NAD levels increase within the cell, the affinity of NadR for the nadB operator regions of nadA, nadB, and pncB increases, repressing the transcription of these genes. The RN kinase activity catalyzes the phosphorylation of RN to form nicotinamide ribonucleotide. The NMN adenylyltransferase activity catalyzes the transfer of the AMP moiety of ATP to nicotinamide ribonucleotide to form NAD(+). The NMN adenylyltransferase domain also functions as the NAD and ATP sensor. The sequence is that of Trifunctional NAD biosynthesis/regulator protein NadR (nadR) from Klebsiella pneumoniae.